Consider the following 186-residue polypeptide: 3-hydroxyanthranilate 3,4-dioxygenase (186 aa).

Residue Arg-44 coordinates O2. Fe cation is bound by residues His-48, Glu-54, and His-96. Residue Glu-54 participates in substrate binding. The substrate site is built by Arg-100 and Glu-110. Positions 125, 130, 164, and 167 each coordinate a divalent metal cation.

The protein belongs to the 3-HAO family. Fe(2+) serves as cofactor.

Its subcellular location is the cytoplasm. It catalyses the reaction 3-hydroxyanthranilate + O2 = (2Z,4Z)-2-amino-3-carboxymuconate 6-semialdehyde. The protein operates within cofactor biosynthesis; NAD(+) biosynthesis; quinolinate from L-kynurenine: step 3/3. Catalyzes the oxidative ring opening of 3-hydroxyanthranilate to 2-amino-3-carboxymuconate semialdehyde, which spontaneously cyclizes to quinolinate. The protein is 3-hydroxyanthranilate 3,4-dioxygenase of Chaetomium globosum (strain ATCC 6205 / CBS 148.51 / DSM 1962 / NBRC 6347 / NRRL 1970) (Soil fungus).